Consider the following 80-residue polypeptide: uncharacterized protein (80 aa).

This is an uncharacterized protein from Bacillus subtilis (strain 168).